The primary structure comprises 513 residues: Zinc finger CCCH-type with G patch domain-containing protein (513 aa).

The segment at 155–178 adopts a C3H1-type zinc-finger fold; it reads PCSYYLEGECRFDETKCRFSHGAL. Residues 252-261 show a composition bias toward acidic residues; that stretch reads DQEEDDELSS. The interval 252-282 is disordered; it reads DQEEDDELSSEESNSSMNNESSDEAESDMDD. Low complexity predominate over residues 262-271; the sequence is EESNSSMNNE. The segment covering 272–282 has biased composition (acidic residues); that stretch reads SSDEAESDMDD. In terms of domain architecture, G-patch spans 312-358; that stretch reads TRGIGSKLMEKMGYIHGTGLGSDGRGIVTPVSAQILPQGRSLDACME. The span at 478-495 shows a compositional bias: polar residues; it reads VQMQSHKQELATLQAQER. The disordered stretch occupies residues 478-513; that stretch reads VQMQSHKQELATLQAQERSLSKEQQTRKSKNKMFEF. A compositionally biased stretch (basic and acidic residues) spans 496-513; it reads SLSKEQQTRKSKNKMFEF.

The protein resides in the nucleus. Transcription repressor. This chain is Zinc finger CCCH-type with G patch domain-containing protein, found in Drosophila erecta (Fruit fly).